We begin with the raw amino-acid sequence, 1374 residues long: DNA-directed RNA polymerase subunit beta (1374 aa).

The protein belongs to the RNA polymerase beta chain family. As to quaternary structure, the RNAP catalytic core consists of 2 alpha, 1 beta, 1 beta' and 1 omega subunit. When a sigma factor is associated with the core the holoenzyme is formed, which can initiate transcription.

The catalysed reaction is RNA(n) + a ribonucleoside 5'-triphosphate = RNA(n+1) + diphosphate. In terms of biological role, DNA-dependent RNA polymerase catalyzes the transcription of DNA into RNA using the four ribonucleoside triphosphates as substrates. This chain is DNA-directed RNA polymerase subunit beta, found in Rhodopseudomonas palustris (strain BisB5).